Consider the following 848-residue polypeptide: ATP-dependent Clp protease ATP-binding subunit ClpC1 (848 aa).

The Clp R domain maps to 2 to 144 (FERFTDRARR…RQQVIQLLSG (143 aa)). Repeat regions lie at residues 5-70 (FTDR…IGQG) and 80-144 (FTPR…LLSG). An i region spans residues 171-418 (LDQFGRNLTA…RMRIRRMTAP (248 aa)). 216–223 (GEPGVGKT) provides a ligand contact to ATP. In terms of domain architecture, UVR spans 425–460 (DEKIAEARREKESAIDAQDFEKAASLRDREKTLVAQ). The tract at residues 479 to 670 (VDDEQIAEVL…VLIFTSNLGT (192 aa)) is II. An ATP-binding site is contributed by 553–560 (GPSGVGKT). Residues 821-848 (TGTRKPPAEPDLAKAGAHSAGGPEPAAR) form a disordered region.

This sequence belongs to the ClpA/ClpB family. ClpC subfamily.

Functionally, ATP-dependent specificity component of the Clp protease. It directs the protease to specific substrates. Can perform chaperone functions in the absence of ClpP. Degrades anti-sigma-E factor RseA in the presence of ClpP2. The protein is ATP-dependent Clp protease ATP-binding subunit ClpC1 (clpC1) of Mycobacterium tuberculosis (strain ATCC 25618 / H37Rv).